Reading from the N-terminus, the 342-residue chain is Pre-mRNA-splicing factor 18 (342 aa).

An N-acetylmethionine modification is found at Met1.

This sequence belongs to the PRP18 family. In terms of assembly, heterodimer with PPIH. Interacts with PRPF4 and with the spliceosome. Part of a complex containing U4/U6 snRNPs.

The protein localises to the nucleus speckle. Functionally, participates in the second step of pre-mRNA splicing. The sequence is that of Pre-mRNA-splicing factor 18 (PRPF18) from Pongo abelii (Sumatran orangutan).